A 521-amino-acid polypeptide reads, in one-letter code: Cytochrome P450 monooxygenase 105 (521 aa).

The chain crosses the membrane as a helical span at residues 12–32 (GVASPATLAVAAVTFLTALVL). Residues N218, N274, and N317 are each glycosylated (N-linked (GlcNAc...) asparagine). A heme-binding site is contributed by C449.

Belongs to the cytochrome P450 family. It depends on heme as a cofactor.

The protein localises to the membrane. It functions in the pathway secondary metabolite biosynthesis. Cytochrome P450 monooxygenase that is able to use anthracene, carbazole, pyrene, phenanthrene and trans-stilbene as substrates for oxidation. These multifunctional properties against a series of polycyclic aromatic hydrocarbons (PAHs) suggest that CYP105 would play important roles, at least in part, in fungal metabolic systems involved in xenobiotic detoxification. The polypeptide is Cytochrome P450 monooxygenase 105 (Postia placenta (strain ATCC 44394 / Madison 698-R) (Brown rot fungus)).